We begin with the raw amino-acid sequence, 493 residues long: Alpha-amylase-related protein (493 aa).

A signal peptide spans 1-19; the sequence is MFKLAFTLTLCLAGSLSLA. Position 20 is a pyrrolidone carboxylic acid (Gln20). Cys47 and Cys103 form a disulfide bridge. 3 residues coordinate Ca(2+): Asn117, Gln168, and Asp177. A disulfide bridge connects residues Cys156 and Cys170. Arg205 serves as a coordination point for chloride. Asp207 acts as the Nucleophile in catalysis. His211 provides a ligand contact to Ca(2+). Glu244 functions as the Proton donor in the catalytic mechanism. Asn307 and Arg342 together coordinate chloride. Cystine bridges form between Cys375–Cys381, Cys417–Cys440, and Cys447–Cys459.

The protein belongs to the glycosyl hydrolase 13 family. As to quaternary structure, monomer. Requires Ca(2+) as cofactor. It depends on chloride as a cofactor.

Its subcellular location is the secreted. The enzyme catalyses Endohydrolysis of (1-&gt;4)-alpha-D-glucosidic linkages in polysaccharides containing three or more (1-&gt;4)-alpha-linked D-glucose units.. This Drosophila orena (Fruit fly) protein is Alpha-amylase-related protein (Amyrel).